Reading from the N-terminus, the 111-residue chain is Fluoride-specific ion channel FluC 3 (111 aa).

Transmembrane regions (helical) follow at residues 26 to 46, 53 to 73, and 91 to 111; these read IPAG…LLTF, VVYL…TFAY, and IFLN…ALML. 2 residues coordinate Na(+): glycine 63 and threonine 66.

This sequence belongs to the fluoride channel Fluc/FEX (TC 1.A.43) family.

It is found in the cell membrane. The catalysed reaction is fluoride(in) = fluoride(out). Na(+) is not transported, but it plays an essential structural role and its presence is essential for fluoride channel function. Its function is as follows. Fluoride-specific ion channel. Important for reducing fluoride concentration in the cell, thus reducing its toxicity. The chain is Fluoride-specific ion channel FluC 3 from Methanosarcina acetivorans (strain ATCC 35395 / DSM 2834 / JCM 12185 / C2A).